A 128-amino-acid chain; its full sequence is Small ribosomal subunit protein uS10 (128 aa).

It belongs to the universal ribosomal protein uS10 family.

The sequence is that of Small ribosomal subunit protein uS10 (RPS20) from Oryza sativa subsp. japonica (Rice).